Consider the following 803-residue polypeptide: MAENSEGLGTVPEHERILQEIESTDTACVGPTLRSVYDDQPNAHKKFMEKLDACIRNHDKEIEKMCNFHHQGFVDAITELLKVRTDAEKLKVQVTDTNRRFQDAGKEVIIQTEDIIRCRIQQRNITTVVENLQYAFPVLEMYSKLKEQMTAKRYYSALKTMEQLENVYFPRVSQYRFCQLMIENLPKLREDIKEISMSDLKDFLESIRKHSDKIGETAMKQAQQQKTFSVALQKQNNVKFGKNMYINDRIPEERKENELKQGFEEEDENEEEILTVQDLVDFSPVYRCLHIYSVLGDEETFENYYRKQRKKQARLVLQPQSNMHETVDGYRRYFTQIVGFFVVEDHILHVTQGLVTRAYTDELWNMALSKIIAVLRAHSSYCTDPDLVLELKNLIVIFADTLQGYGFPVNRLFDLLFEIRDQYNETLLKKWAGVFRDIFEEDNYSPIPIVNEEEYKAVISKFPFQDPDFEKQSFPKKFPMSQSVPHIYIQVKEFIYASLKFSESLHRSSTEIDDMLRKSTNLLLTRTLSSCLLNLIRKPHIGLTELVQIIINTTHLEQACKYLEDFITNITNISQETVHTTRLYGLSTFKDARHAAEGEIYTKLNQKIDEFVQLADYDWTMSEPDGRASGYLMDLINFLRSIFQVFTHLPGKVAQTACMSACQHLSTSLMQMLLDSELKQISMGAVQQFNLDVIQCELFASSEPVPGFQGDTLQLAFIDLRQLLDLFMVWDWSTYLADYGQPASKYLRVNPNTALTLLEKMKDTSKKNNIFAQFRKNDRDKQKLIETVVKQLRSLVNGMSQHT.

It belongs to the SEC15 family. The exocyst complex is composed of EXOC1, EXOC2, EXOC3, EXOC4, EXOC5, EXOC6, EXOC7 and EXOC8. Interacts with CNTRL. Interacts with RAB11A in a GTP-dependent manner.

The protein resides in the cytoplasm. Its subcellular location is the perinuclear region. It is found in the cell projection. It localises to the growth cone. The protein localises to the midbody. The protein resides in the midbody ring. Its function is as follows. Component of the exocyst complex involved in the docking of exocytic vesicles with fusion sites on the plasma membrane. Together with RAB11A, RAB3IP, RAB8A, PARD3, PRKCI, ANXA2, CDC42 and DNMBP promotes transcytosis of PODXL to the apical membrane initiation sites (AMIS), apical surface formation and lumenogenesis. The protein is Exocyst complex component 6 (EXOC6) of Canis lupus familiaris (Dog).